A 118-amino-acid chain; its full sequence is Small ribosomal subunit protein uS13 (118 aa).

The segment at 94-118 (SLPLRGQRTKTNARTRKGPRKPIKK) is disordered.

It belongs to the universal ribosomal protein uS13 family. In terms of assembly, part of the 30S ribosomal subunit. Forms a loose heterodimer with protein S19. Forms two bridges to the 50S subunit in the 70S ribosome.

Its function is as follows. Located at the top of the head of the 30S subunit, it contacts several helices of the 16S rRNA. In the 70S ribosome it contacts the 23S rRNA (bridge B1a) and protein L5 of the 50S subunit (bridge B1b), connecting the 2 subunits; these bridges are implicated in subunit movement. Contacts the tRNAs in the A and P-sites. This is Small ribosomal subunit protein uS13 from Idiomarina loihiensis (strain ATCC BAA-735 / DSM 15497 / L2-TR).